Here is a 387-residue protein sequence, read N- to C-terminus: 8-amino-7-oxononanoate synthase (387 aa).

Arg-19 lines the substrate pocket. Residue 106–107 participates in pyridoxal 5'-phosphate binding; sequence GY. A substrate-binding site is contributed by His-131. Residues Ser-177, His-205, and Thr-236 each coordinate pyridoxal 5'-phosphate. Residue Lys-239 is modified to N6-(pyridoxal phosphate)lysine. Residue Thr-353 coordinates substrate.

This sequence belongs to the class-II pyridoxal-phosphate-dependent aminotransferase family. BioF subfamily. As to quaternary structure, homodimer. Requires pyridoxal 5'-phosphate as cofactor.

The enzyme catalyses 6-carboxyhexanoyl-[ACP] + L-alanine + H(+) = (8S)-8-amino-7-oxononanoate + holo-[ACP] + CO2. Its pathway is cofactor biosynthesis; biotin biosynthesis. Catalyzes the decarboxylative condensation of pimeloyl-[acyl-carrier protein] and L-alanine to produce 8-amino-7-oxononanoate (AON), [acyl-carrier protein], and carbon dioxide. This chain is 8-amino-7-oxononanoate synthase, found in Nitrosomonas europaea (strain ATCC 19718 / CIP 103999 / KCTC 2705 / NBRC 14298).